A 261-amino-acid chain; its full sequence is 5-oxoprolinase subunit A (261 aa).

Belongs to the LamB/PxpA family. As to quaternary structure, forms a complex composed of PxpA, PxpB and PxpC.

The catalysed reaction is 5-oxo-L-proline + ATP + 2 H2O = L-glutamate + ADP + phosphate + H(+). Its function is as follows. Catalyzes the cleavage of 5-oxoproline to form L-glutamate coupled to the hydrolysis of ATP to ADP and inorganic phosphate. The sequence is that of 5-oxoprolinase subunit A from Coprothermobacter proteolyticus (strain ATCC 35245 / DSM 5265 / OCM 4 / BT).